Here is a 462-residue protein sequence, read N- to C-terminus: tRNA-2-methylthio-N(6)-dimethylallyladenosine synthase (462 aa).

The region spanning 2–117 is the MTTase N-terminal domain; sequence KRYFIHTFGC…LPDIIGRVSA (116 aa). Residues cysteine 11, cysteine 47, cysteine 80, cysteine 157, cysteine 161, and cysteine 164 each contribute to the [4Fe-4S] cluster site. The region spanning 143-372 is the Radical SAM core domain; sequence SRGKVTEFVT…QKLQRRISGE (230 aa). A TRAM domain is found at 375–437; that stretch reads AALVGSEVEV…PNQLAGKQVA (63 aa).

The protein belongs to the methylthiotransferase family. MiaB subfamily. In terms of assembly, monomer. Requires [4Fe-4S] cluster as cofactor.

The protein localises to the cytoplasm. The catalysed reaction is N(6)-dimethylallyladenosine(37) in tRNA + (sulfur carrier)-SH + AH2 + 2 S-adenosyl-L-methionine = 2-methylsulfanyl-N(6)-dimethylallyladenosine(37) in tRNA + (sulfur carrier)-H + 5'-deoxyadenosine + L-methionine + A + S-adenosyl-L-homocysteine + 2 H(+). Functionally, catalyzes the methylthiolation of N6-(dimethylallyl)adenosine (i(6)A), leading to the formation of 2-methylthio-N6-(dimethylallyl)adenosine (ms(2)i(6)A) at position 37 in tRNAs that read codons beginning with uridine. The polypeptide is tRNA-2-methylthio-N(6)-dimethylallyladenosine synthase (Myxococcus xanthus (strain DK1622)).